The following is a 519-amino-acid chain: Cytochrome P450 52E2 (519 aa).

The next 2 membrane-spanning stretches (helical) occupy residues 10-30 (MLGGISLSFLLASQAIYFYFI) and 44-64 (PIFFSFPLGIPDLIRLVNAWF). Heme is bound at residue Cys461.

Belongs to the cytochrome P450 family. Heme serves as cofactor.

Its subcellular location is the membrane. In terms of biological role, together with an NADPH cytochrome P450 the enzyme system catalyzes the terminal hydroxylation as the first step in the assimilation of alkanes and fatty acids. In Candida apicola (Yeast), this protein is Cytochrome P450 52E2 (CYP52E2).